Consider the following 588-residue polypeptide: L-fucose isomerase (588 aa).

Residues E335 and D359 each act as proton acceptor in the active site. Mn(2+) contacts are provided by E335, D359, and H525.

The protein belongs to the L-fucose isomerase family. It depends on Mn(2+) as a cofactor.

It localises to the cytoplasm. It catalyses the reaction L-fucose = L-fuculose. It participates in carbohydrate degradation; L-fucose degradation; L-lactaldehyde and glycerone phosphate from L-fucose: step 1/3. Its function is as follows. Converts the aldose L-fucose into the corresponding ketose L-fuculose. This chain is L-fucose isomerase, found in Streptococcus pneumoniae (strain Taiwan19F-14).